The sequence spans 492 residues: NADH-quinone oxidoreductase subunit N (492 aa).

14 consecutive transmembrane segments (helical) span residues 13-33, 43-63, 82-102, 110-132, 136-155, 169-189, 210-230, 245-265, 272-292, 306-326, 331-351, 377-397, 410-430, and 457-477; these read MLPV…GFWL, ILFV…APWA, AALL…LVSL, VSFA…IAFS, IVML…LATL, FLLG…LYGA, IGIL…KIAL, PTLV…AGML, LAAG…TLVI, LLAY…LGDT, AALG…LAVV, AVAL…AGFF, GYLL…VYYL, and VAVA…NLWY.

Belongs to the complex I subunit 2 family. As to quaternary structure, NDH-1 is composed of 15 different subunits. Subunits NuoA, H, J, K, L, M, N constitute the membrane sector of the complex.

Its subcellular location is the cell membrane. The enzyme catalyses a quinone + NADH + 5 H(+)(in) = a quinol + NAD(+) + 4 H(+)(out). Its function is as follows. NDH-1 shuttles electrons from NADH, via FMN and iron-sulfur (Fe-S) centers, to quinones in the respiratory chain. The immediate electron acceptor for the enzyme in this species is believed to be a menaquinone. Couples the redox reaction to proton translocation (for every two electrons transferred, four hydrogen ions are translocated across the cytoplasmic membrane), and thus conserves the redox energy in a proton gradient. This is NADH-quinone oxidoreductase subunit N from Deinococcus radiodurans (strain ATCC 13939 / DSM 20539 / JCM 16871 / CCUG 27074 / LMG 4051 / NBRC 15346 / NCIMB 9279 / VKM B-1422 / R1).